The sequence spans 226 residues: PKHD-type hydroxylase Bpet2704 (226 aa).

Residues K78–S178 enclose the Fe2OG dioxygenase domain. Fe cation-binding residues include H96, D98, and H159. Residue R169 participates in 2-oxoglutarate binding.

Fe(2+) is required as a cofactor. L-ascorbate serves as cofactor.

This Bordetella petrii (strain ATCC BAA-461 / DSM 12804 / CCUG 43448) protein is PKHD-type hydroxylase Bpet2704.